We begin with the raw amino-acid sequence, 245 residues long: Geranylgeranylglyceryl phosphate synthase (245 aa).

D22 and S51 together coordinate Mg(2+). Sn-glycerol 1-phosphate contacts are provided by residues Y169–G175, G200–G201, and G222–T223.

It belongs to the GGGP/HepGP synthase family. Group II subfamily. In terms of assembly, homotetramer. Homohexamer. Requires Mg(2+) as cofactor.

The protein localises to the cytoplasm. The catalysed reaction is sn-glycerol 1-phosphate + (2E,6E,10E)-geranylgeranyl diphosphate = sn-3-O-(geranylgeranyl)glycerol 1-phosphate + diphosphate. The protein operates within membrane lipid metabolism; glycerophospholipid metabolism. Prenyltransferase that catalyzes the transfer of the geranylgeranyl moiety of geranylgeranyl diphosphate (GGPP) to the C3 hydroxyl of sn-glycerol-1-phosphate (G1P). This reaction is the first ether-bond-formation step in the biosynthesis of archaeal membrane lipids. This Methanothermobacter thermautotrophicus (strain ATCC 29096 / DSM 1053 / JCM 10044 / NBRC 100330 / Delta H) (Methanobacterium thermoautotrophicum) protein is Geranylgeranylglyceryl phosphate synthase.